A 427-amino-acid polypeptide reads, in one-letter code: Vitamin D3 receptor (427 aa).

Positions 21–96 (PRICGVCGDR…IGMMKEFILT (76 aa)) form a DNA-binding region, nuclear receptor. Positions 24, 27, 41, 44, 60, 66, 76, and 79 each coordinate Zn(2+). 2 consecutive NR C4-type zinc fingers follow at residues 24–44 (CGVC…CEGC) and 60–84 (CPFN…LKRC). A hinge region spans residues 97–126 (DEEVQRKREMILKRKEEEALKDSLRPKLSE). Residues 127–423 (EQQRIIAILL…LTPLVLEVFG (297 aa)) enclose the NR LBD domain. Tyr-143 is a calcitriol binding site. Residues 158 to 183 (RVNDGGGSHPSRPNSRHTPSFSGDSS) form a disordered region. A calcitriol-binding site is contributed by Ser-237. The interval 246–264 (KMIPGFRDLTSEDQIVLLK) is interaction with coactivator LXXLL motif. 4 residues coordinate calcitriol: Arg-274, Ser-278, His-305, and His-397. A 9aaTAD motif is present at residues 416-424 (PLVLEVFGN).

The protein belongs to the nuclear hormone receptor family. NR1 subfamily. Homodimer in the absence of bound vitamin D3. Heterodimer with RXRA after vitamin D3 binding. Interacts with MED1, NCOA1, NCOA2, NCOA3 and NCOA6 coactivators, leading to a strong increase of transcription of target genes. Interacts with the corepressor NCOR1. Interacts with SNW1. Interacts with IRX4, the interaction does not affect its transactivation activity. Ubiquitinated by UBR5, leading to its degradation: UBR5 specifically recognizes and binds ligand-bound VDR when it is not associated with coactivators (NCOAs). In presence of NCOAs, the UBR5-degron is not accessible, preventing its ubiquitination and degradation.

It localises to the nucleus. The protein resides in the cytoplasm. In terms of biological role, nuclear receptor for calcitriol, the active form of vitamin D3 which mediates the action of this vitamin on cells. Enters the nucleus upon vitamin D3 binding where it forms heterodimers with the retinoid X receptor/RXR. The VDR-RXR heterodimers bind to specific response elements on DNA and activate the transcription of vitamin D3-responsive target genes. Plays a central role in calcium homeostasis. The chain is Vitamin D3 receptor (VDR) from Saguinus oedipus (Cotton-top tamarin).